A 303-amino-acid polypeptide reads, in one-letter code: Glycine--tRNA ligase alpha subunit (303 aa).

It belongs to the class-II aminoacyl-tRNA synthetase family. In terms of assembly, tetramer of two alpha and two beta subunits.

Its subcellular location is the cytoplasm. The catalysed reaction is tRNA(Gly) + glycine + ATP = glycyl-tRNA(Gly) + AMP + diphosphate. This chain is Glycine--tRNA ligase alpha subunit, found in Bordetella pertussis (strain Tohama I / ATCC BAA-589 / NCTC 13251).